A 94-amino-acid chain; its full sequence is Protein canopy homolog 1 (94 aa).

Belongs to the canopy family.

The chain is Protein canopy homolog 1 (Cnpy1) from Mus musculus (Mouse).